A 209-amino-acid polypeptide reads, in one-letter code: FMN-dependent NADH:quinone oxidoreductase 2 (209 aa).

An FMN-binding site is contributed by 17-19 (SAS).

This sequence belongs to the azoreductase type 1 family. As to quaternary structure, homodimer. FMN is required as a cofactor.

The catalysed reaction is 2 a quinone + NADH + H(+) = 2 a 1,4-benzosemiquinone + NAD(+). The enzyme catalyses N,N-dimethyl-1,4-phenylenediamine + anthranilate + 2 NAD(+) = 2-(4-dimethylaminophenyl)diazenylbenzoate + 2 NADH + 2 H(+). In terms of biological role, quinone reductase that provides resistance to thiol-specific stress caused by electrophilic quinones. Functionally, also exhibits azoreductase activity. Catalyzes the reductive cleavage of the azo bond in aromatic azo compounds to the corresponding amines. The protein is FMN-dependent NADH:quinone oxidoreductase 2 of Lactiplantibacillus plantarum (strain ATCC BAA-793 / NCIMB 8826 / WCFS1) (Lactobacillus plantarum).